Consider the following 758-residue polypeptide: Dachshund homolog 1 (758 aa).

Disordered stretches follow at residues 1-105 (MAVP…SNCN) and 134-185 (INAS…TPQN). Residues 20–53 (ISTSASSSGTTTSTSSATSSPAPSIGPPASSGPT) are compositionally biased toward low complexity. The segment covering 73-102 (TGGGGGGGGSGGGGGSSGNGGGGGGGGGGS) has biased composition (gly residues). Positions 140–163 (SSSSSSSSSSSSSSSSSSSSSSSS) are enriched in low complexity. Polar residues predominate over residues 174-185 (STPSPVENTPQN). The segment at 189 to 275 (KMVDLRGAKV…LISRKDFETL (87 aa)) is DACHbox-N. An interaction with SIX6 and HDAC3 region spans residues 189-384 (KMVDLRGAKV…VGSSDGSWDK (196 aa)). Disordered regions lie at residues 280-302 (TNASSRPGRPPKRTQSVTSPENS), 358-414 (SNNQ…PLSH), 474-532 (SPPS…RIPV), and 544-564 (MGLSPNVLPGPKEGDLAGHDM). 3 stretches are compositionally biased toward polar residues: residues 292–301 (RTQSVTSPEN), 358–380 (SNNQHGADSENGDMNSSVGSSDG), and 387–399 (LPSSPSQGPQASI). Residue Ser-491 is modified to Phosphoserine. The segment covering 506–524 (SHPSSHRSSSVSSSPARTE) has biased composition (low complexity). Positions 555 to 564 (KEGDLAGHDM) are enriched in basic and acidic residues. A DACHbox-C region spans residues 616 to 696 (SSIETLLTNI…KAKRKLQEAL (81 aa)). Positions 627-706 (GLLKVAIDNA…EFETKRREQA (80 aa)) are interaction with SIN3A. Residues 630 to 718 (KVAIDNARAQ…TLKQAASTDS (89 aa)) are a coiled coil.

The protein belongs to the DACH/dachshund family. Interacts with SIX1, SIX6 and EYA3. Interacts with NCOR1 and HDAC3 through its N-terminus. Interacts with SIN3A through its C-terminus. Interacts with SMAD3 and SMAD4. In terms of tissue distribution, widely expressed. Isoform 2 is found in brain, heart, kidney, liver, leukocytes and spleen. Isoform 3 is found in liver and heart. Isoform 4 is found in spleen.

The protein localises to the nucleus. Its function is as follows. Transcription factor that is involved in regulation of organogenesis. Seems to be a regulator of SIX1, SIX6 and probably SIX5. Corepression of precursor cell proliferation in myoblasts by SIX1 is switched to coactivation through recruitment of EYA3 to the SIX1-DACH1 complex. Transcriptional activation also seems to involve association of CREBBP. Seems to act as a corepressor of SIX6 in regulating proliferation by directly repressing cyclin-dependent kinase inhibitors, including the p27Kip1 promoter. Inhibits TGF-beta signaling through interaction with SMAD4 and NCOR1. Binds to chromatin DNA via its DACHbox-N domain. The sequence is that of Dachshund homolog 1 (DACH1) from Homo sapiens (Human).